The chain runs to 177 residues: Translation initiation factor IF-3 (177 aa).

This sequence belongs to the IF-3 family. Monomer.

The protein localises to the cytoplasm. Functionally, IF-3 binds to the 30S ribosomal subunit and shifts the equilibrium between 70S ribosomes and their 50S and 30S subunits in favor of the free subunits, thus enhancing the availability of 30S subunits on which protein synthesis initiation begins. The protein is Translation initiation factor IF-3 of Synechocystis sp. (strain ATCC 27184 / PCC 6803 / Kazusa).